The chain runs to 629 residues: tRNA uridine 5-carboxymethylaminomethyl modification enzyme MnmG (629 aa).

14–19 (GAGHAG) is an FAD binding site. 274–288 (GPRYCPSIEDKVVRF) is a binding site for NAD(+).

It belongs to the MnmG family. In terms of assembly, homodimer. Heterotetramer of two MnmE and two MnmG subunits. The cofactor is FAD.

It is found in the cytoplasm. NAD-binding protein involved in the addition of a carboxymethylaminomethyl (cmnm) group at the wobble position (U34) of certain tRNAs, forming tRNA-cmnm(5)s(2)U34. The chain is tRNA uridine 5-carboxymethylaminomethyl modification enzyme MnmG from Xylella fastidiosa (strain Temecula1 / ATCC 700964).